The primary structure comprises 464 residues: ATP synthase subunit beta (464 aa).

148-155 (GGAGVGKT) is an ATP binding site.

The protein belongs to the ATPase alpha/beta chains family. F-type ATPases have 2 components, CF(1) - the catalytic core - and CF(0) - the membrane proton channel. CF(1) has five subunits: alpha(3), beta(3), gamma(1), delta(1), epsilon(1). CF(0) has three main subunits: a(1), b(2) and c(9-12). The alpha and beta chains form an alternating ring which encloses part of the gamma chain. CF(1) is attached to CF(0) by a central stalk formed by the gamma and epsilon chains, while a peripheral stalk is formed by the delta and b chains.

It is found in the cell inner membrane. The catalysed reaction is ATP + H2O + 4 H(+)(in) = ADP + phosphate + 5 H(+)(out). Functionally, produces ATP from ADP in the presence of a proton gradient across the membrane. The catalytic sites are hosted primarily by the beta subunits. This chain is ATP synthase subunit beta, found in Acinetobacter baumannii (strain AB0057).